The primary structure comprises 233 residues: uncharacterized protein (233 aa).

Helical transmembrane passes span Phe78–Tyr98, Phe113–Leu133, and Phe188–Ile208.

Its subcellular location is the membrane. This is an uncharacterized protein from Saccharomyces cerevisiae (strain ATCC 204508 / S288c) (Baker's yeast).